The primary structure comprises 576 residues: RING finger and SPRY domain-containing protein 1 (576 aa).

Positions Met1 to Gly16 are cleaved as a signal peptide. Phosphoserine is present on Ser50. Residues Ser50–Asn99 are disordered. Over residues Asp57 to Val68 the composition is skewed to polar residues. A compositionally biased stretch (basic residues) spans Pro83 to Lys97. Positions Leu300–Phe483 constitute a B30.2/SPRY domain. Asn314 carries an N-linked (GlcNAc...) asparagine glycan. The segment at Cys527–Arg562 adopts an RING-type zinc-finger fold.

Its subcellular location is the secreted. The protein is RING finger and SPRY domain-containing protein 1 (RSPRY1) of Pongo abelii (Sumatran orangutan).